Reading from the N-terminus, the 123-residue chain is Integration host factor subunit alpha (123 aa).

The disordered stretch occupies residues 97–123; it reads NANGSAPSMSSSASAVDDDKSESASRT. Low complexity predominate over residues 98–111; that stretch reads ANGSAPSMSSSASA. Positions 113–123 are enriched in basic and acidic residues; it reads DDDKSESASRT.

Belongs to the bacterial histone-like protein family. As to quaternary structure, heterodimer of an alpha and a beta chain.

This protein is one of the two subunits of integration host factor, a specific DNA-binding protein that functions in genetic recombination as well as in transcriptional and translational control. The protein is Integration host factor subunit alpha of Rhodopseudomonas palustris (strain BisB5).